The chain runs to 43 residues: Large ribosomal subunit protein bL32 (43 aa).

It belongs to the bacterial ribosomal protein bL32 family.

In Carsonella ruddii (strain PV), this protein is Large ribosomal subunit protein bL32 (rpmF).